Here is a 314-residue protein sequence, read N- to C-terminus: Homoserine O-succinyltransferase (314 aa).

Catalysis depends on C142, which acts as the Acyl-thioester intermediate. Substrate contacts are provided by K163 and S192. Residue H235 is the Proton acceptor of the active site. Residue E237 is part of the active site. Substrate is bound at residue R249.

Belongs to the MetA family.

Its subcellular location is the cytoplasm. It catalyses the reaction L-homoserine + succinyl-CoA = O-succinyl-L-homoserine + CoA. It participates in amino-acid biosynthesis; L-methionine biosynthesis via de novo pathway; O-succinyl-L-homoserine from L-homoserine: step 1/1. Functionally, transfers a succinyl group from succinyl-CoA to L-homoserine, forming succinyl-L-homoserine. The chain is Homoserine O-succinyltransferase from Shewanella sediminis (strain HAW-EB3).